The sequence spans 360 residues: MASMMFTDCSSTTTSRLIHLNRSSGTFLLRQCVGQLRLQTTASGRGCCIRSSSSPISSISADTKSEGGAIVIDGKAVAKKIRDEITIEVSRMKESIGVIPGLAVILVGDRKDSATYVRNKKKACDSVGIKSFEVRLAEDSSEEEVLKSVSGFNDDPSVHGILVQLPLPSHMDEQNILNAVSIEKDVDGFHPLNIGRLAMRGREPLFVPCTPKGCIELLHRYNIEIKGKRAVVIGRSNIVGMPAALLLQREDATVSIIHSRTKNPEEITREADIIISAVGQPNMVRGSWIKPGAVLIDVGINPVEDPSAARGYRLVGDICYEEASKVASAITPVPGGVGPMTIAMLLSNTLTSAKRIHNFQ.

A chloroplast-targeting transit peptide spans 1-51 (MASMMFTDCSSTTTSRLIHLNRSSGTFLLRQCVGQLRLQTTASGRGCCIRS). Ser52 is modified (N-acetylserine).

This sequence belongs to the tetrahydrofolate dehydrogenase/cyclohydrolase family. As to quaternary structure, homodimer.

The protein localises to the plastid. Its subcellular location is the chloroplast. The catalysed reaction is (6R)-5,10-methylene-5,6,7,8-tetrahydrofolate + NADP(+) = (6R)-5,10-methenyltetrahydrofolate + NADPH. It catalyses the reaction (6R)-5,10-methenyltetrahydrofolate + H2O = (6R)-10-formyltetrahydrofolate + H(+). The protein operates within one-carbon metabolism; tetrahydrofolate interconversion. Its function is as follows. Catalyzes the oxidation of 5,10-methylenetetrahydrofolate to 5,10-methenyltetrahydrofolate and then the hydrolysis of 5,10-methenyltetrahydrofolate to 10-formyltetrahydrofolate. The protein is Bifunctional protein FolD 4, chloroplastic (FOLD4) of Arabidopsis thaliana (Mouse-ear cress).